The primary structure comprises 381 residues: Gas vesicle protein C (381 aa).

Repeat copies occupy residues Gln-22–Asn-59, Asp-60–Arg-84, Asp-85–His-122, Glu-123–Gln-160, Gly-161–Ala-192, Asp-193–Glu-232, and Glu-233–Ile-274. Residues Gln-22–Ile-274 form a 7 X approximate tandem repeats region. Residues Ala-261–Thr-333 form a disordered region. Over residues Asp-276 to Gln-318 the composition is skewed to acidic residues.

It belongs to the halobacterial gas vesicle GvpC family. Post-translationally, detected as 2 slightly different sizes in vivo; the proteins appears larger in SDS-PAGE probably due to the acidic tail.

Its subcellular location is the gas vesicle. Functionally, confers stability, involved in shaping gas vesicles (GV), hollow, gas filled proteinaceous nanostructures found in some microorganisms. They allow positioning of halobacteria at the optimal depth for growth in the poorly aerated, shallow brine pools of their habitat. Its function is as follows. Expression of a 9.5 kb mc-vac DNA fragment containing 2 divergently transcribed regions (gvpD-gvpE-gvpF-gvpG-gvpH-gvpI-gvpJ-gvpK-gvpL-gvpM and gvpA-gvpC-gvpN-gvpO) allows H.volcanii to produce gas vesicles. This is Gas vesicle protein C from Haloferax mediterranei (strain ATCC 33500 / DSM 1411 / JCM 8866 / NBRC 14739 / NCIMB 2177 / R-4) (Halobacterium mediterranei).